The primary structure comprises 382 residues: Mannitol-1-phosphate 5-dehydrogenase (382 aa).

3–14 (ALHFGAGNIGRG) provides a ligand contact to NAD(+).

The protein belongs to the mannitol dehydrogenase family.

It catalyses the reaction D-mannitol 1-phosphate + NAD(+) = beta-D-fructose 6-phosphate + NADH + H(+). This chain is Mannitol-1-phosphate 5-dehydrogenase, found in Mannheimia succiniciproducens (strain KCTC 0769BP / MBEL55E).